A 418-amino-acid chain; its full sequence is STE20-related kinase adapter protein beta (418 aa).

Positions 58 to 369 constitute a Protein kinase domain; it reads YELQVEIGRG…ASSLLSHVFF (312 aa). Residues 64 to 72 and lysine 89 each bind ATP; that span reads IGRGFDNLT.

Belongs to the protein kinase superfamily. STE Ser/Thr protein kinase family. STE20 subfamily. In terms of assembly, component of a trimeric complex composed of STK11/LKB1, STRAD (STRADA or STRADB) and CAB39/MO25 (CAB39/MO25alpha or CAB39L/MO25beta): the complex tethers STK11/LKB1 in the cytoplasm and stimulates its catalytic activity. Interacts with BIRC4/XIAP. These two proteins are likely to coexist in a complex with TAK1, TRAF6, TAB1 and TAB2.

The protein localises to the nucleus. The protein resides in the cytoplasm. Pseudokinase which, in complex with CAB39/MO25 (CAB39/MO25alpha or CAB39L/MO25beta), binds to and activates STK11/LKB1. Adopts a closed conformation typical of active protein kinases and binds STK11/LKB1 as a pseudosubstrate, promoting conformational change of STK11/LKB1 in an active conformation. The chain is STE20-related kinase adapter protein beta (Stradb) from Mus musculus (Mouse).